Consider the following 167-residue polypeptide: Peroxiredoxin Pen c 3 (167 aa).

The region spanning Leu-3–Leu-167 is the Thioredoxin domain. Cys-60 acts as the Cysteine sulfenic acid (-SOH) intermediate in catalysis.

The protein belongs to the peroxiredoxin family. Prx5 subfamily. In terms of assembly, homodimer; disulfide-linked, upon oxidation.

It catalyses the reaction a hydroperoxide + [thioredoxin]-dithiol = an alcohol + [thioredoxin]-disulfide + H2O. In terms of biological role, thiol-specific peroxidase that catalyzes the reduction of hydrogen peroxide and organic hydroperoxides to water and alcohols, respectively. Plays a role in cell protection against oxidative stress by detoxifying peroxides and as sensor of hydrogen peroxide-mediated signaling events. This chain is Peroxiredoxin Pen c 3, found in Penicillium citrinum.